Reading from the N-terminus, the 35-residue chain is Photosystem II reaction center protein T (35 aa).

Residues 3-23 (ALVYTFLLVSTLGIIFFAIFF) traverse the membrane as a helical segment.

The protein belongs to the PsbT family. As to quaternary structure, PSII is composed of 1 copy each of membrane proteins PsbA, PsbB, PsbC, PsbD, PsbE, PsbF, PsbH, PsbI, PsbJ, PsbK, PsbL, PsbM, PsbT, PsbY, PsbZ, Psb30/Ycf12, at least 3 peripheral proteins of the oxygen-evolving complex and a large number of cofactors. It forms dimeric complexes.

Its subcellular location is the plastid. The protein localises to the chloroplast thylakoid membrane. Its function is as follows. Found at the monomer-monomer interface of the photosystem II (PS II) dimer, plays a role in assembly and dimerization of PSII. PSII is a light-driven water plastoquinone oxidoreductase, using light energy to abstract electrons from H(2)O, generating a proton gradient subsequently used for ATP formation. The protein is Photosystem II reaction center protein T of Pinus thunbergii (Japanese black pine).